The chain runs to 107 residues: Toluene 1,2-dioxygenase system ferredoxin subunit (107 aa).

Positions 4–99 constitute a Rieske domain; that stretch reads TYILRQGDLP…IKVEGDEVHV (96 aa). Residues Cys43, His45, Cys62, and His65 each contribute to the [2Fe-2S] cluster site.

This sequence belongs to the bacterial ring-hydroxylating dioxygenase ferredoxin component family. As to quaternary structure, this dioxygenase system consists of four proteins: the two subunits of the hydroxylase component (todC1 and todC2), a ferredoxin (TodB) and a ferredoxin reductase (TodA).

The protein operates within xenobiotic degradation; toluene degradation. This protein seems to be a 2Fe-2S ferredoxin. This is Toluene 1,2-dioxygenase system ferredoxin subunit (todB) from Pseudomonas putida (strain ATCC 700007 / DSM 6899 / JCM 31910 / BCRC 17059 / LMG 24140 / F1).